We begin with the raw amino-acid sequence, 1228 residues long: Structural maintenance of chromosomes protein 1 (1228 aa).

ATP is bound at residue 32-39; that stretch reads GPNGAGKS. Positions 197-510 form a coiled coil; it reads NKKRGINAEL…ESKQDAKKRE (314 aa). The SMC hinge domain occupies 522 to 635; the sequence is VKGRIIDLCT…CDSMTVARDL (114 aa). Coiled coils occupy residues 710–783, 814–926, and 984–1068; these read KLHS…KIFS, EFTK…EIDR, and VEVD…KRLQ.

It belongs to the SMC family. SMC1 subfamily. In terms of assembly, cohesin complexes are composed of the psm1/smc1 and psm3/smc3 heterodimer attached via their SMC hinge domain, rad21/scc1 which link them, and psc3/scc3, which interacts with rad21.

It is found in the nucleus. Its subcellular location is the chromosome. Its function is as follows. Involved in chromosome cohesion during cell cycle and in DNA repair. Central component of cohesin complex. The cohesin complex is required for the cohesion of sister chromatids after DNA replication. The cohesin complex apparently forms a large proteinaceous ring within which sister chromatids can be trapped. At anaphase, the complex is cleaved and dissociates from chromatin, allowing sister chromatids to segregate. In Schizosaccharomyces pombe (strain 972 / ATCC 24843) (Fission yeast), this protein is Structural maintenance of chromosomes protein 1 (psm1).